The primary structure comprises 446 residues: Adenylosuccinate synthetase (446 aa).

Residues glycine 20–lysine 26 and glycine 48–threonine 50 contribute to the GTP site. Aspartate 21 (proton acceptor) is an active-site residue. Mg(2+) contacts are provided by aspartate 21 and glycine 48. Residues aspartate 21–lysine 24, asparagine 46–histidine 49, threonine 137, arginine 151, glutamine 232, threonine 247, and arginine 319 each bind IMP. Histidine 49 (proton donor) is an active-site residue. Residue serine 315–arginine 321 participates in substrate binding. GTP-binding positions include arginine 321, lysine 347–aspartate 349, and serine 429–glycine 431.

This sequence belongs to the adenylosuccinate synthetase family. As to quaternary structure, homodimer. The cofactor is Mg(2+).

Its subcellular location is the cytoplasm. The catalysed reaction is IMP + L-aspartate + GTP = N(6)-(1,2-dicarboxyethyl)-AMP + GDP + phosphate + 2 H(+). It participates in purine metabolism; AMP biosynthesis via de novo pathway; AMP from IMP: step 1/2. Plays an important role in the de novo pathway of purine nucleotide biosynthesis. Catalyzes the first committed step in the biosynthesis of AMP from IMP. The sequence is that of Adenylosuccinate synthetase from Polynucleobacter asymbioticus (strain DSM 18221 / CIP 109841 / QLW-P1DMWA-1) (Polynucleobacter necessarius subsp. asymbioticus).